A 1017-amino-acid chain; its full sequence is Anaphase-promoting complex subunit 5 (1017 aa).

5 TPR repeats span residues 30-63, 182-214, 252-286, 337-370, and 508-541; these read KQSLSHLLIRHIKENNYQDTVKEVSLYDFIEKEL, DMSMDQEQQQQQQEDYNEISNYENKIKFLSPLD, VKRVHLISLLFNIGYQDYDQSLEDLHRYFDYVNGQ, PYAVLNLVRLHYHFGHYEESYLALREAIRIAQER, and NNNNNNNNNNNSSNSNNNGGVNMFGKSFHLWNDI. A compositionally biased stretch (low complexity) spans 451–525; the sequence is INSNNYNSNN…NNNSSNSNNN (75 aa). Disordered stretches follow at residues 451–527 and 617–636; these read INSN…NNGG and NNNNNNNNNNNQIKQQQQQN. 5 TPR repeats span residues 642–675, 756–790, 838–871, 876–908, and 931–964; these read LLSFCKLALLYSKKSKYNEAIQILIKCFSIYKTQ, VICYQKIIKYYCNVRGMYEKSMNLIVKGIQISRDF, ADSNIALIKIHLSTDRLDKAITLIKETLPMVLSD, SQLYLLWAKSLISTSTKQSIDYLNRSEQLFLQL, and KEIYYLKSIIYNDLGDIENRNLYAKKFKSILVPS.

It belongs to the APC5 family. As to quaternary structure, the APC/C is composed of at least 13 subunits that stay tightly associated throughout the cell cycle: anapc1, anapc2, anapc3, anapc4, anapc5, anapc6, anapc7, anapc8, anapc10, anapc11, cdc20, cdc26 and cdh1.

It localises to the nucleus. It participates in protein modification; protein ubiquitination. Component of the anaphase promoting complex/cyclosome (APC/C), a cell cycle-regulated E3 ubiquitin-protein ligase complex that controls progression through mitosis and the G1 phase of the cell cycle. The sequence is that of Anaphase-promoting complex subunit 5 (anapc5) from Dictyostelium discoideum (Social amoeba).